The primary structure comprises 320 residues: Methionyl-tRNA formyltransferase (320 aa).

112 to 115 (SILP) serves as a coordination point for (6S)-5,6,7,8-tetrahydrofolate.

Belongs to the Fmt family.

It carries out the reaction L-methionyl-tRNA(fMet) + (6R)-10-formyltetrahydrofolate = N-formyl-L-methionyl-tRNA(fMet) + (6S)-5,6,7,8-tetrahydrofolate + H(+). Attaches a formyl group to the free amino group of methionyl-tRNA(fMet). The formyl group appears to play a dual role in the initiator identity of N-formylmethionyl-tRNA by promoting its recognition by IF2 and preventing the misappropriation of this tRNA by the elongation apparatus. This Shewanella woodyi (strain ATCC 51908 / MS32) protein is Methionyl-tRNA formyltransferase.